We begin with the raw amino-acid sequence, 392 residues long: Extracellular metalloproteinase 4 (392 aa).

Positions 1-9 are excised as a propeptide; that stretch reads VHSVVDYVS. N-linked (GlcNAc...) asparagine glycans are attached at residues N27 and N176. Zn(2+) is bound at residue H193. The active site involves E194. Zn(2+) is bound at residue H197. N-linked (GlcNAc...) asparagine glycans are attached at residues N359 and N385.

The protein belongs to the peptidase M36 family. Requires Zn(2+) as cofactor.

It localises to the secreted. Functionally, secreted metalloproteinase probably acting as a virulence factor. The polypeptide is Extracellular metalloproteinase 4 (MEP4) (Trichophyton violaceum).